A 330-amino-acid polypeptide reads, in one-letter code: Stomatin-1 (330 aa).

Residues 1–19 (MQPSETVEMQEMAQPSGQQ) show a composition bias toward polar residues. The tract at residues 1–27 (MQPSETVEMQEMAQPSGQQRDVEARVQ) is disordered. A helical membrane pass occupies residues 42–62 (MFCIAMSYVLIFLTFPVSVFM).

Belongs to the band 7/mec-2 family.

It is found in the membrane. This chain is Stomatin-1 (sto-1), found in Caenorhabditis elegans.